A 60-amino-acid chain; its full sequence is Large ribosomal subunit protein uL30 (60 aa).

Belongs to the universal ribosomal protein uL30 family. In terms of assembly, part of the 50S ribosomal subunit.

The chain is Large ribosomal subunit protein uL30 from Oceanobacillus iheyensis (strain DSM 14371 / CIP 107618 / JCM 11309 / KCTC 3954 / HTE831).